The following is a 158-amino-acid chain: Transcription elongation factor GreA (158 aa).

Positions 47-75 form a coiled coil; it reads ENSEYDAAKDEQAFVEQRITQVEKMIRNA.

The protein belongs to the GreA/GreB family.

Its function is as follows. Necessary for efficient RNA polymerase transcription elongation past template-encoded arresting sites. The arresting sites in DNA have the property of trapping a certain fraction of elongating RNA polymerases that pass through, resulting in locked ternary complexes. Cleavage of the nascent transcript by cleavage factors such as GreA or GreB allows the resumption of elongation from the new 3'terminus. GreA releases sequences of 2 to 3 nucleotides. This is Transcription elongation factor GreA from Oceanobacillus iheyensis (strain DSM 14371 / CIP 107618 / JCM 11309 / KCTC 3954 / HTE831).